The primary structure comprises 195 residues: MRTAEITRNTNETRIRVAVNLDGTGKQTIDTGVPFLDHMLDQIARHGLIDLDIKADGDLHIDAHHTVEDVGITLGMAIAKAVGSKAGLRRYGHAYVPLDEALSRVVIDFSGRPGLEYHIDFTRARIGDFDVDLTREFFQGLVNHALMTLHIDNLRGFNAHHQCETVFKAFGRALRMALEVDPRMGDAVPSTKGVL.

This sequence belongs to the imidazoleglycerol-phosphate dehydratase family.

It is found in the cytoplasm. The enzyme catalyses D-erythro-1-(imidazol-4-yl)glycerol 3-phosphate = 3-(imidazol-4-yl)-2-oxopropyl phosphate + H2O. It participates in amino-acid biosynthesis; L-histidine biosynthesis; L-histidine from 5-phospho-alpha-D-ribose 1-diphosphate: step 6/9. The sequence is that of Imidazoleglycerol-phosphate dehydratase from Bordetella bronchiseptica (strain ATCC BAA-588 / NCTC 13252 / RB50) (Alcaligenes bronchisepticus).